We begin with the raw amino-acid sequence, 65 residues long: Sodium channel neurotoxin MeuNaTxalpha-9 (65 aa).

The 63-residue stretch at 2–64 (RDGYIANDRN…VPIRIPGECR (63 aa)) folds into the LCN-type CS-alpha/beta domain. Cystine bridges form between cysteine 12–cysteine 63, cysteine 16–cysteine 36, cysteine 22–cysteine 46, and cysteine 26–cysteine 48. Arginine amide is present on arginine 64.

It belongs to the long (4 C-C) scorpion toxin superfamily. Sodium channel inhibitor family. Alpha subfamily. As to expression, expressed by the venom gland.

It is found in the secreted. Its function is as follows. Alpha toxins bind voltage-independently at site-3 of sodium channels (Nav) and inhibit the inactivation of the activated channels, thereby blocking neuronal transmission. In Mesobuthus eupeus (Lesser Asian scorpion), this protein is Sodium channel neurotoxin MeuNaTxalpha-9.